The sequence spans 136 residues: Cytochrome b5 (136 aa).

The Cytochrome b5 heme-binding domain maps to 5-81; the sequence is TKVFTLAEVS…LDEYYVGDID (77 aa). Heme contacts are provided by H40 and H64. A helical transmembrane segment spans residues 107–127; that stretch reads FVVKLLQFLVPLIILGVAFGI.

This sequence belongs to the cytochrome b5 family. As to expression, is highly expressed in developing seeds, moderately expressed in flowers, and is expressed at low levels in the leaf.

The protein localises to the endoplasmic reticulum membrane. It is found in the microsome membrane. Cytochrome b5 is a membrane bound hemoprotein which function as an electron carrier for several membrane bound oxygenases. May play a key role in the modification by desaturation of fatty acids in the endoplasmic reticulum, which in the developing seed is utilized for membrane synthesis and in the developmentally regulated production of large amounts of storage lipids. Is involved in the reduction of cytochrome P-450 and may therefore be involved in flavonoid biosynthesis in the petals. This is Cytochrome b5 from Nicotiana tabacum (Common tobacco).